A 248-amino-acid polypeptide reads, in one-letter code: UDP-2,3-diacylglucosamine hydrolase (248 aa).

Residues Asp-7, His-9, Asp-40, Asn-78, and His-113 each coordinate Mn(2+). 78–79 (NR) lines the substrate pocket. Substrate is bound by residues Asp-121, Ser-159, Thr-163, Lys-166, and His-194. Residues His-194 and His-196 each contribute to the Mn(2+) site.

It belongs to the LpxH family. Mn(2+) is required as a cofactor.

Its subcellular location is the cell inner membrane. The catalysed reaction is UDP-2-N,3-O-bis[(3R)-3-hydroxytetradecanoyl]-alpha-D-glucosamine + H2O = 2-N,3-O-bis[(3R)-3-hydroxytetradecanoyl]-alpha-D-glucosaminyl 1-phosphate + UMP + 2 H(+). It functions in the pathway glycolipid biosynthesis; lipid IV(A) biosynthesis; lipid IV(A) from (3R)-3-hydroxytetradecanoyl-[acyl-carrier-protein] and UDP-N-acetyl-alpha-D-glucosamine: step 4/6. Its function is as follows. Hydrolyzes the pyrophosphate bond of UDP-2,3-diacylglucosamine to yield 2,3-diacylglucosamine 1-phosphate (lipid X) and UMP by catalyzing the attack of water at the alpha-P atom. Involved in the biosynthesis of lipid A, a phosphorylated glycolipid that anchors the lipopolysaccharide to the outer membrane of the cell. The sequence is that of UDP-2,3-diacylglucosamine hydrolase from Pseudomonas fluorescens (strain Pf0-1).